Here is a 174-residue protein sequence, read N- to C-terminus: Imidazole glycerol phosphate synthase subunit HisH (174 aa).

A Glutamine amidotransferase type-1 domain is found at 2–174; it reads SVVIINTGCA…AAVNKDNFWR (173 aa). C77 acts as the Nucleophile in catalysis.

In terms of assembly, heterodimer of HisH and HisF.

The protein resides in the cytoplasm. It carries out the reaction 5-[(5-phospho-1-deoxy-D-ribulos-1-ylimino)methylamino]-1-(5-phospho-beta-D-ribosyl)imidazole-4-carboxamide + L-glutamine = D-erythro-1-(imidazol-4-yl)glycerol 3-phosphate + 5-amino-1-(5-phospho-beta-D-ribosyl)imidazole-4-carboxamide + L-glutamate + H(+). The enzyme catalyses L-glutamine + H2O = L-glutamate + NH4(+). The protein operates within amino-acid biosynthesis; L-histidine biosynthesis; L-histidine from 5-phospho-alpha-D-ribose 1-diphosphate: step 5/9. In terms of biological role, IGPS catalyzes the conversion of PRFAR and glutamine to IGP, AICAR and glutamate. The HisH subunit catalyzes the hydrolysis of glutamine to glutamate and ammonia as part of the synthesis of IGP and AICAR. The resulting ammonia molecule is channeled to the active site of HisF. The sequence is that of Imidazole glycerol phosphate synthase subunit HisH (hisH) from Buchnera aphidicola subsp. Schlechtendalia chinensis.